The following is a 757-amino-acid chain: Primary amine oxidase (757 aa).

The N-terminal stretch at 1–30 is a signal peptide; it reads MGSPSLYSARKTTLALAVALSFAWQAPVFA. Substrate is bound by residues 411–422 and 493–498; these read YLDSGDYGMGTL and VGNYDY. The Proton acceptor role is filled by D413. The Schiff-base intermediate with substrate; via topaquinone role is filled by Y496. Position 496 is a 2',4',5'-topaquinone (Y496). Cu cation contacts are provided by H554 and H556. Residues D563, L564, D565, E603, Y697, D700, E702, D708, and A709 each coordinate Ca(2+). D563 contacts Mn(2+). Residue D565 coordinates Mn(2+). Positions 680 to 701 are disordered; it reads PEGKYPNRSTHDTGLGQYSKDN. D708 serves as a coordination point for Mn(2+). Residue H719 participates in Cu cation binding.

This sequence belongs to the copper/topaquinone oxidase family. In terms of assembly, homodimer. It depends on Cu cation as a cofactor. Zn(2+) serves as cofactor. Ca(2+) is required as a cofactor. The cofactor is L-topaquinone. Requires Mn(2+) as cofactor. Post-translationally, topaquinone (TPQ) is generated by copper-dependent autoxidation of a specific tyrosyl residue.

The protein resides in the periplasm. It catalyses the reaction a primary methyl amine + O2 + H2O = an aldehyde + H2O2 + NH4(+). It carries out the reaction 2-phenylethylamine + O2 + H2O = 2-phenylacetaldehyde + H2O2 + NH4(+). Its pathway is amino-acid degradation; L-phenylalanine degradation; phenylacetate from L-phenylalanine: step 2/3. With respect to regulation, inhibited by 2-hydrazinopyridine. Its function is as follows. The enzyme prefers aromatic over aliphatic amines. The polypeptide is Primary amine oxidase (tynA) (Escherichia coli (strain K12)).